A 571-amino-acid chain; its full sequence is uncharacterized protein (571 aa).

5 consecutive transmembrane segments (helical) span residues 10-29 (VRLH…HFIG), 36-55 (VSLG…GLLF), 65-87 (WAFF…FASL), 96-118 (ALAV…LFRF), and 166-188 (ATTY…PRLL). Positions 294–378 (TEVDDQELLS…IATAARNLGF (85 aa)) constitute an RCK C-terminal domain. The next 6 helical transmembrane spans lie at 388 to 406 (LVYL…LLQV), 411 to 433 (VPLG…WLYS), 446 to 465 (LRLL…GLAA), 480 to 502 (LFAK…GLLL), 509 to 531 (LPPV…LNAL), and 546 to 568 (VPFA…CAVA).

The protein belongs to the AAE transporter (TC 2.A.81) family.

The protein localises to the cell membrane. This is an uncharacterized protein from Bordetella parapertussis (strain 12822 / ATCC BAA-587 / NCTC 13253).